The sequence spans 103 residues: MIGKEVTVQDIILELSEVQPEVLPVDLFCEEELPNEQETEEEPDIERISYKVIAPCGCRHCEVKLRIFVHATEFGIRAFQQLLTGDLQLLCPDCRGNCKHDGS.

The E7 terminal domain stretch occupies residues 1–47; it reads MIGKEVTVQDIILELSEVQPEVLPVDLFCEEELPNEQETEEEPDIER. An LXCXE motif; interaction with host RB1 and TMEM173/STING motif is present at residues 27 to 31; that stretch reads LFCEE. A zinc finger spans residues 56-94; sequence CGCRHCEVKLRIFVHATEFGIRAFQQLLTGDLQLLCPDC. The short motif at 76–84 is the Nuclear export signal element; that stretch reads IRAFQQLLT.

Belongs to the papillomaviridae E7 protein family. In terms of assembly, homodimer. Homooligomer. Interacts with host RB1; this interaction induces dissociation of RB1-E2F1 complex thereby disrupting RB1 activity. Interacts with host EP300; this interaction represses EP300 transcriptional activity. Interacts with protein E2; this interaction inhibits E7 oncogenic activity. Interacts with host TMEM173/STING; this interaction impairs the ability of TMEM173/STING to sense cytosolic DNA and promote the production of type I interferon (IFN-alpha and IFN-beta). In terms of processing, highly phosphorylated.

The protein resides in the host cytoplasm. It is found in the host nucleus. Plays a role in viral genome replication by driving entry of quiescent cells into the cell cycle. Stimulation of progression from G1 to S phase allows the virus to efficiently use the cellular DNA replicating machinery to achieve viral genome replication. E7 protein has both transforming and trans-activating activities. Induces the disassembly of the E2F1 transcription factor from RB1, with subsequent transcriptional activation of E2F1-regulated S-phase genes. Interferes with host histone deacetylation mediated by HDAC1 and HDAC2, leading to transcription activation. Also plays a role in the inhibition of both antiviral and antiproliferative functions of host interferon alpha. Interaction with host TMEM173/STING impairs the ability of TMEM173/STING to sense cytosolic DNA and promote the production of type I interferon (IFN-alpha and IFN-beta). This chain is Protein E7, found in Homo sapiens (Human).